Consider the following 317-residue polypeptide: Melanocyte-stimulating hormone receptor (317 aa).

Residues M1–E37 lie on the Extracellular side of the membrane. N29 carries N-linked (GlcNAc...) asparagine glycosylation. Residues V38–I63 form a helical membrane-spanning segment. Topologically, residues A64 to P72 are cytoplasmic. A helical membrane pass occupies residues M73–L93. Topologically, residues E94–N118 are extracellular. The chain crosses the membrane as a helical span at residues V119–M140. Residues D141–G163 are Cytoplasmic-facing. A helical membrane pass occupies residues V164 to Y183. At D184 to C191 the chain is on the extracellular side. The chain crosses the membrane as a helical span at residues L192–L211. Residues A212–A240 lie on the Cytoplasmic side of the membrane. The helical transmembrane segment at A241–L266 threads the bilayer. At C267–N279 the chain is on the extracellular side. Residues F280 to F300 traverse the membrane as a helical segment. The Cytoplasmic segment spans residues R301–W317. C315 carries the S-palmitoyl cysteine lipid modification.

This sequence belongs to the G-protein coupled receptor 1 family. Interacts with MGRN1, but does not undergo MGRN1-mediated ubiquitination; this interaction competes with GNAS-binding and thus inhibits agonist-induced cAMP production. Interacts with OPN3; the interaction results in a decrease in MC1R-mediated cAMP signaling and ultimately a decrease in melanin production in melanocytes.

It localises to the cell membrane. Its function is as follows. Receptor for MSH (alpha, beta and gamma) and ACTH. The activity of this receptor is mediated by G proteins which activate adenylate cyclase. Mediates melanogenesis, the production of eumelanin (black/brown) and phaeomelanin (red/yellow), via regulation of cAMP signaling in melanocytes. The protein is Melanocyte-stimulating hormone receptor (MC1R) of Presbytis comata (Grizzled leaf monkey).